Reading from the N-terminus, the 101-residue chain is Large ribosomal subunit protein uL24 (101 aa).

The protein belongs to the universal ribosomal protein uL24 family. As to quaternary structure, part of the 50S ribosomal subunit.

In terms of biological role, one of two assembly initiator proteins, it binds directly to the 5'-end of the 23S rRNA, where it nucleates assembly of the 50S subunit. One of the proteins that surrounds the polypeptide exit tunnel on the outside of the subunit. This Streptococcus suis (strain 98HAH33) protein is Large ribosomal subunit protein uL24.